We begin with the raw amino-acid sequence, 743 residues long: Serine/threonine-protein kinase GD17699 (743 aa).

A disordered region spans residues 54-78 (NVQEDNSYNRDCDSPVSSSSEPEKE). Doublecortin domains are found at residues 154-240 (LRIK…VEYN) and 309-392 (RIVT…AEDF). The Protein kinase domain occupies 473 to 731 (YTLGRIIGDG…SEDILDHPWT (259 aa)). Residues 479–487 (IGDGNFAIV) and Lys502 contribute to the ATP site. The Proton acceptor role is filled by Asp594.

This sequence belongs to the protein kinase superfamily. CAMK Ser/Thr protein kinase family. CaMK subfamily.

The enzyme catalyses L-seryl-[protein] + ATP = O-phospho-L-seryl-[protein] + ADP + H(+). The catalysed reaction is L-threonyl-[protein] + ATP = O-phospho-L-threonyl-[protein] + ADP + H(+). The protein is Serine/threonine-protein kinase GD17699 of Drosophila simulans (Fruit fly).